Consider the following 81-residue polypeptide: Neurotoxin LmNaTx11.1 (81 aa).

An N-terminal signal peptide occupies residues 1 to 18 (MKIVIIFFIAMMAVGVYS). In terms of domain architecture, LCN-type CS-alpha/beta spans 19-80 (KDGYLVKKNG…PTYPSSKTCS (62 aa)). Cystine bridges form between Cys-29/Cys-79, Cys-33/Cys-56, Cys-42/Cys-61, and Cys-46/Cys-63.

The protein belongs to the long (4 C-C) scorpion toxin superfamily. Sodium channel inhibitor family. Beta subfamily. In terms of tissue distribution, expressed by the venom gland.

Its subcellular location is the secreted. Functionally, binds voltage-independently at site-4 of sodium channels (Nav) and shift the voltage of activation toward more negative potentials thereby affecting sodium channel activation and promoting spontaneous and repetitive firing. This chain is Neurotoxin LmNaTx11.1, found in Lychas mucronatus (Chinese swimming scorpion).